The chain runs to 353 residues: Ribosomal RNA large subunit methyltransferase M (353 aa).

Residues S179, 212–215, D231, D251, and D267 each bind S-adenosyl-L-methionine; that span reads APGG. Catalysis depends on K296, which acts as the Proton acceptor.

This sequence belongs to the class I-like SAM-binding methyltransferase superfamily. RNA methyltransferase RlmE family. RlmM subfamily. As to quaternary structure, monomer.

The protein resides in the cytoplasm. The enzyme catalyses cytidine(2498) in 23S rRNA + S-adenosyl-L-methionine = 2'-O-methylcytidine(2498) in 23S rRNA + S-adenosyl-L-homocysteine + H(+). In terms of biological role, catalyzes the 2'-O-methylation at nucleotide C2498 in 23S rRNA. The chain is Ribosomal RNA large subunit methyltransferase M from Laribacter hongkongensis (strain HLHK9).